The sequence spans 211 residues: ATP phosphoribosyltransferase (211 aa).

It belongs to the ATP phosphoribosyltransferase family. Short subfamily. Heteromultimer composed of HisG and HisZ subunits.

The protein resides in the cytoplasm. The catalysed reaction is 1-(5-phospho-beta-D-ribosyl)-ATP + diphosphate = 5-phospho-alpha-D-ribose 1-diphosphate + ATP. It functions in the pathway amino-acid biosynthesis; L-histidine biosynthesis; L-histidine from 5-phospho-alpha-D-ribose 1-diphosphate: step 1/9. Catalyzes the condensation of ATP and 5-phosphoribose 1-diphosphate to form N'-(5'-phosphoribosyl)-ATP (PR-ATP). Has a crucial role in the pathway because the rate of histidine biosynthesis seems to be controlled primarily by regulation of HisG enzymatic activity. The sequence is that of ATP phosphoribosyltransferase from Pseudomonas putida (strain ATCC 700007 / DSM 6899 / JCM 31910 / BCRC 17059 / LMG 24140 / F1).